A 912-amino-acid polypeptide reads, in one-letter code: Metabotropic glutamate receptor 4 (912 aa).

The N-terminal stretch at 1–32 (MSGKGGWAWWWARLPLCLLLSLYAPWVPSSLG) is a signal peptide. The Extracellular portion of the chain corresponds to 33-587 (KPKGHPHMNS…IVKLEWDSPW (555 aa)). Cysteines 67 and 109 form a disulfide. N98 carries N-linked (GlcNAc...) asparagine glycosylation. Residues S159, 180–182 (AST), and Y230 each bind L-glutamate. Disulfide bonds link C249/C538, C372/C388, C428/C435, C520/C539, C524/C542, C545/C557, and C560/C573. N-linked (GlcNAc...) asparagine glycosylation occurs at N301. D312 is an L-glutamate binding site. K405 contributes to the L-glutamate binding site. N-linked (GlcNAc...) asparagine glycosylation is found at N454 and N484. An N-linked (GlcNAc...) asparagine glycan is attached at N569. The helical transmembrane segment at 588-610 (AVLPLFLAVVGIAATLFVVVTFV) threads the bilayer. Topologically, residues 611–624 (RYNDTPIVKASGRE) are cytoplasmic. The chain crosses the membrane as a helical span at residues 625-645 (LSYVLLAGIFLCYATTFLMIA). Over 646 to 656 (EPDLGTCSLRR) the chain is Extracellular. Residues 657-675 (IFLGLGMSISYAALLTKTN) traverse the membrane as a helical segment. Over 676 to 699 (RIYRIFEQGKRSVSAPRFISPASQ) the chain is Cytoplasmic. Residues 700–720 (LAITFILISLQLLGICVWFVV) traverse the membrane as a helical segment. The Extracellular portion of the chain corresponds to 721–750 (DPSHSVVDFQDQRTLDPRFARGVLKCDISD). The chain crosses the membrane as a helical span at residues 751-772 (LSLICLLGYSMLLMVTCTVYAI). Residues 773–785 (KTRGVPETFNEAK) lie on the Cytoplasmic side of the membrane. A helical transmembrane segment spans residues 786–808 (PIGFTMYTTCIVWLAFIPIFFGT). The Extracellular portion of the chain corresponds to 809–821 (SQSADKLYIQTTT). A helical transmembrane segment spans residues 822–847 (LTVSVSLSASVSLGMLYMPKVYIILF). Residues 848 to 912 (HPEQNVPKRK…TYVTYTNHAI (65 aa)) are Cytoplasmic-facing.

It belongs to the G-protein coupled receptor 3 family. As to quaternary structure, interacts with PICK1. Is widely distributed in the CNS. Predominant expression is seen in the granule cells of the cerebellum.

Its subcellular location is the cell membrane. In terms of biological role, G-protein coupled receptor for glutamate. Ligand binding causes a conformation change that triggers signaling via guanine nucleotide-binding proteins (G proteins) and modulates the activity of down-stream effectors. Signaling inhibits adenylate cyclase activity. The chain is Metabotropic glutamate receptor 4 (Grm4) from Rattus norvegicus (Rat).